The following is a 256-amino-acid chain: Zinc metalloprotease (256 aa).

Catalysis depends on histidine 74, which acts as the Proton donor.

Belongs to the peptidase M4 family. Requires Zn(2+) as cofactor.

The protein localises to the secreted. Functionally, may play a role in ulcer formation. Proteolytic digestion of gastric mucus has been suggested as an important mechanism by which its pathogenicity is at least partly exerted. The protein is Zinc metalloprotease (hap) of Helicobacter pylori (Campylobacter pylori).